Here is a 946-residue protein sequence, read N- to C-terminus: DNA primase (946 aa).

Residues 596–626 are disordered; sequence RDTEEDEDGKEDKNNVPDNGVFQKTTSSVDT. Positions 617-626 are enriched in polar residues; the sequence is FQKTTSSVDT. The CHC2-type zinc finger occupies 881–920; the sequence is CLNYTHRNPQETVQVFIDLRTEHSYALWASLWSRCFTKKC.

Belongs to the herpesviridae DNA primase family. Associates with the helicase and the primase-associated factor to form the helicase-primase factor.

Its subcellular location is the host nucleus. Its function is as follows. Essential component of the helicase/primase complex. Unwinds the DNA at the replication forks and generates single-stranded DNA for both leading and lagging strand synthesis. The primase initiates primer synthesis and thereby produces large amount of short RNA primers on the lagging strand that the polymerase elongates using dNTPs. This chain is DNA primase (UL70), found in Human cytomegalovirus (strain AD169) (HHV-5).